The following is a 558-amino-acid chain: Formate--tetrahydrofolate ligase (558 aa).

65–72 (TPAGEGKT) is an ATP binding site.

Belongs to the formate--tetrahydrofolate ligase family.

The enzyme catalyses (6S)-5,6,7,8-tetrahydrofolate + formate + ATP = (6R)-10-formyltetrahydrofolate + ADP + phosphate. Its pathway is one-carbon metabolism; tetrahydrofolate interconversion. The polypeptide is Formate--tetrahydrofolate ligase (Methylobacterium sp. (strain 4-46)).